The sequence spans 498 residues: Galactose-1-phosphate uridylyltransferase (498 aa).

Belongs to the galactose-1-phosphate uridylyltransferase type 2 family.

It is found in the cytoplasm. It catalyses the reaction alpha-D-galactose 1-phosphate + UDP-alpha-D-glucose = alpha-D-glucose 1-phosphate + UDP-alpha-D-galactose. The protein operates within carbohydrate metabolism; galactose metabolism. This is Galactose-1-phosphate uridylyltransferase from Clostridium perfringens (strain SM101 / Type A).